A 316-amino-acid chain; its full sequence is Transaldolase A (316 aa).

Lysine 131 serves as the catalytic Schiff-base intermediate with substrate.

This sequence belongs to the transaldolase family. Type 1 subfamily. As to quaternary structure, homodimer.

The protein resides in the cytoplasm. It carries out the reaction D-sedoheptulose 7-phosphate + D-glyceraldehyde 3-phosphate = D-erythrose 4-phosphate + beta-D-fructose 6-phosphate. The protein operates within carbohydrate degradation; pentose phosphate pathway; D-glyceraldehyde 3-phosphate and beta-D-fructose 6-phosphate from D-ribose 5-phosphate and D-xylulose 5-phosphate (non-oxidative stage): step 2/3. Functionally, transaldolase is important for the balance of metabolites in the pentose-phosphate pathway. The polypeptide is Transaldolase A (talA) (Escherichia coli O157:H7).